Consider the following 253-residue polypeptide: Imidazole glycerol phosphate synthase subunit HisF (253 aa).

Residues Asp-11 and Asp-130 contribute to the active site.

It belongs to the HisA/HisF family. In terms of assembly, heterodimer of HisH and HisF.

The protein localises to the cytoplasm. It carries out the reaction 5-[(5-phospho-1-deoxy-D-ribulos-1-ylimino)methylamino]-1-(5-phospho-beta-D-ribosyl)imidazole-4-carboxamide + L-glutamine = D-erythro-1-(imidazol-4-yl)glycerol 3-phosphate + 5-amino-1-(5-phospho-beta-D-ribosyl)imidazole-4-carboxamide + L-glutamate + H(+). Its pathway is amino-acid biosynthesis; L-histidine biosynthesis; L-histidine from 5-phospho-alpha-D-ribose 1-diphosphate: step 5/9. Functionally, IGPS catalyzes the conversion of PRFAR and glutamine to IGP, AICAR and glutamate. The HisF subunit catalyzes the cyclization activity that produces IGP and AICAR from PRFAR using the ammonia provided by the HisH subunit. This is Imidazole glycerol phosphate synthase subunit HisF from Dehalococcoides mccartyi (strain ATCC BAA-2266 / KCTC 15142 / 195) (Dehalococcoides ethenogenes (strain 195)).